We begin with the raw amino-acid sequence, 493 residues long: Cysteine--tRNA ligase (493 aa).

Cys31 serves as a coordination point for Zn(2+). Residues 33-43 (PTVYGDAHLGH) carry the 'HIGH' region motif. Residues Cys226, His251, and Glu255 each contribute to the Zn(2+) site. A 'KMSKS' region motif is present at residues 283-287 (KMGKS). Lys286 lines the ATP pocket.

This sequence belongs to the class-I aminoacyl-tRNA synthetase family. As to quaternary structure, monomer. The cofactor is Zn(2+).

It is found in the cytoplasm. The catalysed reaction is tRNA(Cys) + L-cysteine + ATP = L-cysteinyl-tRNA(Cys) + AMP + diphosphate. This Bacteroides thetaiotaomicron (strain ATCC 29148 / DSM 2079 / JCM 5827 / CCUG 10774 / NCTC 10582 / VPI-5482 / E50) protein is Cysteine--tRNA ligase.